Consider the following 342-residue polypeptide: Anthranilate phosphoribosyltransferase (342 aa).

5-phospho-alpha-D-ribose 1-diphosphate contacts are provided by residues Gly79, 82–83 (GD), Thr87, 89–92 (NIST), 107–115 (KHCNQRISS), and Ser119. Residue Gly79 participates in anthranilate binding. Ser91 provides a ligand contact to Mg(2+). Asn110 is a binding site for anthranilate. Arg165 is a binding site for anthranilate. The Mg(2+) site is built by Asp223 and Glu224.

This sequence belongs to the anthranilate phosphoribosyltransferase family. In terms of assembly, homodimer. Mg(2+) is required as a cofactor.

It catalyses the reaction N-(5-phospho-beta-D-ribosyl)anthranilate + diphosphate = 5-phospho-alpha-D-ribose 1-diphosphate + anthranilate. The protein operates within amino-acid biosynthesis; L-tryptophan biosynthesis; L-tryptophan from chorismate: step 2/5. Catalyzes the transfer of the phosphoribosyl group of 5-phosphorylribose-1-pyrophosphate (PRPP) to anthranilate to yield N-(5'-phosphoribosyl)-anthranilate (PRA). The chain is Anthranilate phosphoribosyltransferase from Buchnera aphidicola subsp. Acyrthosiphon pisum (strain Tuc7).